A 261-amino-acid chain; its full sequence is Large ribosomal subunit protein uL10m (261 aa).

Residues 1-28 constitute a mitochondrion transit peptide; the sequence is MAAAVAGMLRGGLLPQAGRLPTLQTVRY. The disordered stretch occupies residues 242–261; sequence EKDSVMSANGKPDPDTVPDS.

The protein belongs to the universal ribosomal protein uL10 family. In terms of assembly, component of the mitochondrial large ribosomal subunit (mt-LSU). Mature mammalian 55S mitochondrial ribosomes consist of a small (28S) and a large (39S) subunit. The 28S small subunit contains a 12S ribosomal RNA (12S mt-rRNA) and 30 different proteins. The 39S large subunit contains a 16S rRNA (16S mt-rRNA), a copy of mitochondrial valine transfer RNA (mt-tRNA(Val)), which plays an integral structural role, and 52 different proteins. uL10m contributes a single cysteine residue to a zinc-binding site with mL66.

It localises to the mitochondrion. In Homo sapiens (Human), this protein is Large ribosomal subunit protein uL10m (MRPL10).